A 142-amino-acid polypeptide reads, in one-letter code: Large ribosomal subunit protein uL11 (142 aa).

Belongs to the universal ribosomal protein uL11 family. As to quaternary structure, part of the ribosomal stalk of the 50S ribosomal subunit. Interacts with L10 and the large rRNA to form the base of the stalk. L10 forms an elongated spine to which L12 dimers bind in a sequential fashion forming a multimeric L10(L12)X complex. In terms of processing, one or more lysine residues are methylated.

In terms of biological role, forms part of the ribosomal stalk which helps the ribosome interact with GTP-bound translation factors. The sequence is that of Large ribosomal subunit protein uL11 from Pasteurella multocida (strain Pm70).